We begin with the raw amino-acid sequence, 156 residues long: ATP synthase subunit b (156 aa).

A helical membrane pass occupies residues 11 to 31 (AIAFILFVAFCMKYVWPPLMA).

The protein belongs to the ATPase B chain family. F-type ATPases have 2 components, F(1) - the catalytic core - and F(0) - the membrane proton channel. F(1) has five subunits: alpha(3), beta(3), gamma(1), delta(1), epsilon(1). F(0) has three main subunits: a(1), b(2) and c(10-14). The alpha and beta chains form an alternating ring which encloses part of the gamma chain. F(1) is attached to F(0) by a central stalk formed by the gamma and epsilon chains, while a peripheral stalk is formed by the delta and b chains.

Its subcellular location is the cell inner membrane. F(1)F(0) ATP synthase produces ATP from ADP in the presence of a proton or sodium gradient. F-type ATPases consist of two structural domains, F(1) containing the extramembraneous catalytic core and F(0) containing the membrane proton channel, linked together by a central stalk and a peripheral stalk. During catalysis, ATP synthesis in the catalytic domain of F(1) is coupled via a rotary mechanism of the central stalk subunits to proton translocation. Functionally, component of the F(0) channel, it forms part of the peripheral stalk, linking F(1) to F(0). The protein is ATP synthase subunit b of Erwinia tasmaniensis (strain DSM 17950 / CFBP 7177 / CIP 109463 / NCPPB 4357 / Et1/99).